A 253-amino-acid polypeptide reads, in one-letter code: Triosephosphate isomerase (253 aa).

Asn-9–Lys-11 lines the substrate pocket. His-97 serves as the catalytic Electrophile. Residue Glu-169 is the Proton acceptor of the active site. Substrate-binding positions include Gly-175, Ser-215, and Gly-236–Gly-237.

Belongs to the triosephosphate isomerase family. In terms of assembly, homodimer.

The protein localises to the cytoplasm. It catalyses the reaction D-glyceraldehyde 3-phosphate = dihydroxyacetone phosphate. It functions in the pathway carbohydrate biosynthesis; gluconeogenesis. Its pathway is carbohydrate degradation; glycolysis; D-glyceraldehyde 3-phosphate from glycerone phosphate: step 1/1. Involved in the gluconeogenesis. Catalyzes stereospecifically the conversion of dihydroxyacetone phosphate (DHAP) to D-glyceraldehyde-3-phosphate (G3P). The protein is Triosephosphate isomerase of Staphylococcus aureus (strain Mu50 / ATCC 700699).